Reading from the N-terminus, the 645-residue chain is MSEAEYLKAVEMLNIWAKAYYTQDNPLATDIEYDVLYKKVETFENEFPDLKVSYSPTNRVGDAVSEGFEKINHKAKMWSMEDIFDDNELLAWLERGEKAGLEFFVEPKFDGASLNLTYENGVLISAGTRGNGETGENVTQNVKVINSIPLQIDYKEKIEIRGEVVIAKSDFDALNDERANSGENLFANPRNAAAGSLRQLDSAVVKSRHLKFFPWDVGENSLNFKKHSEIMEFVRNLGFLKDDFVRVCASLTDLRKAYVDLHEMRERKDILMDGMVIRINELTKCENMGYTIKFPRFMVAYKFPPVEKATKLIDINLQVGRTGVITPVGVLEPVNIDGATVRNATLHNFDEIARLGLMKGDIVSIIRSGDVIPKITGVFGARRNGSETPIKRPEFCPVCGSRLLVEDIFIRCQNLTCKARIVNSLIYFCSKKCMNIDGLGEAIINTLFEKGKIINISDIYTLKADDLEGLEGFKDKKISNLLASIENSRISPLYRFITALGIEHIGEVAARKIAEIFGENWLNASFDEILKIDGFGEAMAKSFVGFCEINREKIENLLSFLHLSAQKTEISQNVFTKKTVVITGTLSISRDEMKEKLIKMGANVTNSVSKKTDFVLFGKDAGSKLEKAKMLGVKAISEDEFKEML.

NAD(+) is bound by residues 30–34, 79–80, and Glu106; these read DIEYD and SM. The active-site N6-AMP-lysine intermediate is the Lys108. NAD(+) is bound by residues Arg129, Glu163, and Lys302. Cys396, Cys399, Cys412, and Cys417 together coordinate Zn(2+). The 76-residue stretch at 570-645 folds into the BRCT domain; the sequence is ISQNVFTKKT…ISEDEFKEML (76 aa).

It belongs to the NAD-dependent DNA ligase family. LigA subfamily. The cofactor is Mg(2+). Mn(2+) is required as a cofactor.

The enzyme catalyses NAD(+) + (deoxyribonucleotide)n-3'-hydroxyl + 5'-phospho-(deoxyribonucleotide)m = (deoxyribonucleotide)n+m + AMP + beta-nicotinamide D-nucleotide.. Its function is as follows. DNA ligase that catalyzes the formation of phosphodiester linkages between 5'-phosphoryl and 3'-hydroxyl groups in double-stranded DNA using NAD as a coenzyme and as the energy source for the reaction. It is essential for DNA replication and repair of damaged DNA. The protein is DNA ligase of Campylobacter hominis (strain ATCC BAA-381 / DSM 21671 / CCUG 45161 / LMG 19568 / NCTC 13146 / CH001A).